Here is a 196-residue protein sequence, read N- to C-terminus: MEVILLERIPRLGQMGDVVRVKDGFARNFLLRQGKALRANDANRKKFESQRVELEARNLERKSEAQAVAEKLDGKSFVVIRSAAETGQLYGSVSARDIADVVASEGFKIGRNQVDINQPIKTIGLTNVAIALHPEVVATVTLNIARSADEAERQARGETLDSAEAIYGEEINESARPEAFFDPEAEIEQEEGEENA.

Positions 172–196 (NESARPEAFFDPEAEIEQEEGEENA) are disordered. A compositionally biased stretch (acidic residues) spans 181-196 (FDPEAEIEQEEGEENA).

It belongs to the bacterial ribosomal protein bL9 family.

In terms of biological role, binds to the 23S rRNA. This is Large ribosomal subunit protein bL9 from Chelativorans sp. (strain BNC1).